A 238-amino-acid chain; its full sequence is Fatty acid metabolism regulator protein (238 aa).

The HTH gntR-type domain maps to 6–74 (KGPASFAEKY…HGKPTRVNNF (69 aa)). Residues 34-53 (ERELSELIGVTRTTLREVLQ) constitute a DNA-binding region (H-T-H motif).

In terms of assembly, homodimer.

Its subcellular location is the cytoplasm. In terms of biological role, multifunctional regulator of fatty acid metabolism. The protein is Fatty acid metabolism regulator protein of Shewanella baltica (strain OS155 / ATCC BAA-1091).